Here is a 719-residue protein sequence, read N- to C-terminus: ATP-dependent RNA helicase p62 (719 aa).

The disordered stretch occupies residues 94-234 (AQSQRAFRDS…GSQDLPMRPV (141 aa)). Basic and acidic residues-rich tracts occupy residues 99–108 (AFRDSSKPDS) and 137–171 (EEIK…DRRG). Residues 172–188 (GGGGGNRFGGGGGGGDY) show a composition bias toward gly residues. Over residues 194–205 (GRVEKRRDDRGG) the composition is skewed to basic and acidic residues. Residues 206 to 226 (GNRFGGGGGFGDRRGGGGGGS) are compositionally biased toward gly residues. The short motif at 281 to 309 (QDFSEVHLPDYVMKEIRRQGYKAPTAIQA) is the Q motif element. Residues 312 to 487 (WPIAMSGSNF…EDFLGNYIQI (176 aa)) enclose the Helicase ATP-binding domain. 325–332 (AKTGSGKT) provides a ligand contact to ATP. A DEAD box motif is present at residues 435-438 (DEAD). The 146-residue stretch at 519–664 (LLSDIYDTSE…EINPALENLA (146 aa)) folds into the Helicase C-terminal domain. A disordered region spans residues 689–719 (GGGFKKGSLSNGRGFGGGGGGGGEGRHSRFD). The segment covering 701 to 711 (RGFGGGGGGGG) has biased composition (gly residues).

The protein belongs to the DEAD box helicase family. DDX5/DBP2 subfamily. As to quaternary structure, interacts with Fmr1 to form the RNA-induced silencing complex (RISC), a ribonucleoprotein (RNP) complex involved in translation regulation, other components of the complex are RpL5, RpL11, AGO2 and Dcr-1.

Its subcellular location is the nucleus. It localises to the nucleolus. The protein resides in the cytoplasm. It is found in the cytosol. It carries out the reaction ATP + H2O = ADP + phosphate + H(+). Its function is as follows. As an RNA helicase, unwinds RNA and alters RNA structures through ATP binding and hydrolysis. Involved in multiple cellular processes, including pre-mRNA splicing, alternative splicing, rRNA processing and miRNA processing, as well as transcription regulation. Plays a role in innate immunity. Specifically restricts bunyavirus infection, including Rift Valley fever virus (RVFV) or La Crosse virus (LACV), but not vesicular stomatitis virus (VSV), in an interferon- and DROSHA-independent manner. In Drosophila melanogaster (Fruit fly), this protein is ATP-dependent RNA helicase p62 (Rm62).